A 423-amino-acid chain; its full sequence is Histidine--tRNA ligase (423 aa).

Belongs to the class-II aminoacyl-tRNA synthetase family. Homodimer.

The protein resides in the cytoplasm. It carries out the reaction tRNA(His) + L-histidine + ATP = L-histidyl-tRNA(His) + AMP + diphosphate + H(+). This is Histidine--tRNA ligase from Haemophilus ducreyi (strain 35000HP / ATCC 700724).